The sequence spans 397 residues: Purine ribonucleoside efflux pump NepI (397 aa).

Residues 1–21 lie on the Cytoplasmic side of the membrane; it reads MNENIAEKFRADGVARPNWSA. The helical transmembrane segment at 22–42 threads the bilayer; it reads VFAVAFCVACLITVEFLPVSL. Residues 43-54 are Periplasmic-facing; that stretch reads LTPMAQDLGISE. A helical membrane pass occupies residues 55–75; the sequence is GIAGQSVTVTAFVAMFSSLFI. Residues 76–85 lie on the Cytoplasmic side of the membrane; that stretch reads TQIIQATDRR. The chain crosses the membrane as a helical span at residues 86 to 106; the sequence is YIVILFAVLLTASCLMVSFAN. A topological domain (periplasmic) is located at residue Ser107. The helical transmembrane segment at 108–128 threads the bilayer; it reads FTLLLLGRACLGLALGGFWAM. Over 129–147 the chain is Cytoplasmic; sequence SASLTMRLVPARTVPKALS. Residues 148–168 traverse the membrane as a helical segment; sequence VIFGAVSIALVIAAPLGSFLG. Residues 169 to 175 lie on the Periplasmic side of the membrane; that stretch reads GIIGWRN. Residues 176-196 traverse the membrane as a helical segment; sequence VFNAAAVMGVLCVIWVVKSLP. The Cytoplasmic segment spans residues 197-215; the sequence is SLPGEPSHQKQNMFSLLQR. Residues 216–236 form a helical membrane-spanning segment; it reads PGVMAGMIAIFMSFAGQFAFF. The Periplasmic portion of the chain corresponds to 237 to 255; it reads TYIRPVYMNLAGFDVDGLT. A helical membrane pass occupies residues 256 to 276; sequence LVLLSFGIASFVGTSFSSYVL. Topologically, residues 277-281 are cytoplasmic; it reads KRSVK. Residues 282–302 form a helical membrane-spanning segment; sequence LALAGAPLLLALSALTLIVWG. The Periplasmic segment spans residues 303 to 305; sequence SDK. The chain crosses the membrane as a helical span at residues 306 to 326; it reads TVAAVIAIIWGLAFALVPVGW. The Cytoplasmic portion of the chain corresponds to 327 to 343; it reads STWITRSLADQAEKAGS. A helical membrane pass occupies residues 344-364; the sequence is IQVAVIQLANTCGAAVGGYAL. The Periplasmic portion of the chain corresponds to 365-366; it reads DN. Residues 367-387 form a helical membrane-spanning segment; it reads FGLLSPLALSGCLMLLTALVV. Topologically, residues 388–397 are cytoplasmic; the sequence is AAKVRITPMS.

It belongs to the major facilitator superfamily. DHA1 family. NepI (TC 2.A.1.2.26) subfamily.

Its subcellular location is the cell inner membrane. The catalysed reaction is inosine(in) + H(+)(out) = inosine(out) + H(+)(in). The enzyme catalyses guanosine(in) + H(+)(out) = guanosine(out) + H(+)(in). Its function is as follows. Involved in the efflux of purine ribonucleosides, such as inosine and guanosine. The sequence is that of Purine ribonucleoside efflux pump NepI from Salmonella enteritidis PT4 (strain P125109).